A 216-amino-acid chain; its full sequence is MMNKIHKDNRGVLIVISGPSGAGKGTICKALLEKHDDIFISISATTRNPRVGEVDGVNYHFLTKEEFKQRIAEDDFLEHAEVYGNYYGTPKSSVEKMLDEGKNVILEIDIQGALKVKEKATDGVFIFILPPSMEELKQRIIKRGSETPESLMTRFKSAYKEINYVSKYNYAVVNDNVEDAVKKIEAILLAEKCRVDRLKENLLESKEDEMHEQLYD.

The Guanylate kinase-like domain maps to 11–189 (GVLIVISGPS…AVKKIEAILL (179 aa)). 18–25 (GPSGAGKG) contributes to the ATP binding site.

It belongs to the guanylate kinase family.

The protein resides in the cytoplasm. The enzyme catalyses GMP + ATP = GDP + ADP. In terms of biological role, essential for recycling GMP and indirectly, cGMP. The chain is Guanylate kinase (gmk) from Clostridium perfringens (strain 13 / Type A).